The chain runs to 408 residues: LL-diaminopimelate aminotransferase (408 aa).

Substrate-binding residues include Y15 and G42. Pyridoxal 5'-phosphate contacts are provided by residues Y72, 108–109 (SK), Y132, N187, Y218, and 246–248 (SFS). K109, Y132, and N187 together coordinate substrate. K249 is subject to N6-(pyridoxal phosphate)lysine. Pyridoxal 5'-phosphate contacts are provided by R257 and N292. Substrate is bound by residues N292 and R388.

Belongs to the class-I pyridoxal-phosphate-dependent aminotransferase family. LL-diaminopimelate aminotransferase subfamily. Homodimer. It depends on pyridoxal 5'-phosphate as a cofactor.

It carries out the reaction (2S,6S)-2,6-diaminopimelate + 2-oxoglutarate = (S)-2,3,4,5-tetrahydrodipicolinate + L-glutamate + H2O + H(+). It participates in amino-acid biosynthesis; L-lysine biosynthesis via DAP pathway; LL-2,6-diaminopimelate from (S)-tetrahydrodipicolinate (aminotransferase route): step 1/1. Involved in the synthesis of meso-diaminopimelate (m-DAP or DL-DAP), required for both lysine and peptidoglycan biosynthesis. Catalyzes the direct conversion of tetrahydrodipicolinate to LL-diaminopimelate. The chain is LL-diaminopimelate aminotransferase from Synechococcus sp. (strain WH7803).